We begin with the raw amino-acid sequence, 137 residues long: Protein PsiE homolog (137 aa).

A run of 4 helical transmembrane segments spans residues 15–35, 55–75, 82–102, and 108–128; these read LRIT…AFLI, YYMT…ALIV, FHFP…RFII, and ATST…LFLA.

The protein belongs to the PsiE family.

It is found in the cell membrane. This is Protein PsiE homolog from Listeria innocua serovar 6a (strain ATCC BAA-680 / CLIP 11262).